A 440-amino-acid polypeptide reads, in one-letter code: Thymidine phosphorylase (440 aa).

The protein belongs to the thymidine/pyrimidine-nucleoside phosphorylase family. Homodimer.

It catalyses the reaction thymidine + phosphate = 2-deoxy-alpha-D-ribose 1-phosphate + thymine. It functions in the pathway pyrimidine metabolism; dTMP biosynthesis via salvage pathway; dTMP from thymine: step 1/2. Functionally, the enzymes which catalyze the reversible phosphorolysis of pyrimidine nucleosides are involved in the degradation of these compounds and in their utilization as carbon and energy sources, or in the rescue of pyrimidine bases for nucleotide synthesis. This chain is Thymidine phosphorylase, found in Serratia proteamaculans (strain 568).